A 289-amino-acid polypeptide reads, in one-letter code: Phosphatidylserine decarboxylase proenzyme (289 aa).

Residues D88, H145, and S251 each act as charge relay system; for autoendoproteolytic cleavage activity in the active site. Catalysis depends on S251, which acts as the Schiff-base intermediate with substrate; via pyruvic acid; for decarboxylase activity. S251 is modified (pyruvic acid (Ser); by autocatalysis).

Belongs to the phosphatidylserine decarboxylase family. PSD-B subfamily. Prokaryotic type I sub-subfamily. As to quaternary structure, heterodimer of a large membrane-associated beta subunit and a small pyruvoyl-containing alpha subunit. The cofactor is pyruvate. Post-translationally, is synthesized initially as an inactive proenzyme. Formation of the active enzyme involves a self-maturation process in which the active site pyruvoyl group is generated from an internal serine residue via an autocatalytic post-translational modification. Two non-identical subunits are generated from the proenzyme in this reaction, and the pyruvate is formed at the N-terminus of the alpha chain, which is derived from the carboxyl end of the proenzyme. The autoendoproteolytic cleavage occurs by a canonical serine protease mechanism, in which the side chain hydroxyl group of the serine supplies its oxygen atom to form the C-terminus of the beta chain, while the remainder of the serine residue undergoes an oxidative deamination to produce ammonia and the pyruvoyl prosthetic group on the alpha chain. During this reaction, the Ser that is part of the protease active site of the proenzyme becomes the pyruvoyl prosthetic group, which constitutes an essential element of the active site of the mature decarboxylase.

The protein resides in the cell membrane. The enzyme catalyses a 1,2-diacyl-sn-glycero-3-phospho-L-serine + H(+) = a 1,2-diacyl-sn-glycero-3-phosphoethanolamine + CO2. It functions in the pathway phospholipid metabolism; phosphatidylethanolamine biosynthesis; phosphatidylethanolamine from CDP-diacylglycerol: step 2/2. In terms of biological role, catalyzes the formation of phosphatidylethanolamine (PtdEtn) from phosphatidylserine (PtdSer). The protein is Phosphatidylserine decarboxylase proenzyme of Polaromonas naphthalenivorans (strain CJ2).